The primary structure comprises 486 residues: Vesicular GABA transporter (486 aa).

The Cytoplasmic segment spans residues 1–93 (MASNRFQNLQ…EASEPISALQ (93 aa)). The segment covering 29–46 (LNEVPSYQNQPQTGESGS) has biased composition (polar residues). Positions 29–85 (LNEVPSYQNQPQTGESGSNPPPHDRLEPIQESVVSEQPQKDDINKQEEAKDDGHGEA) are disordered. Over residues 66-85 (PQKDDINKQEEAKDDGHGEA) the composition is skewed to basic and acidic residues. The chain crosses the membrane as a helical span at residues 94–114 (AAWNVTNAIQGMFIVGLPIAV). The Lumenal, vesicle segment spans residues 115 to 119 (KVGGW). The chain crosses the membrane as a helical span at residues 120 to 140 (WSIGAMVGVAYVCYWTGVLLI). Residues 141-167 (ECLYENGVKKRKTYREIADFYKPGFGK) are Cytoplasmic-facing. Residues 168–188 (WVLAAQLTELLSTCIIYLVLA) traverse the membrane as a helical segment. Over 189-203 (ADLLQSCFPSVDKAG) the chain is Lumenal, vesicle. Residues 204–224 (WMMITSASLLTCSFLDDLQIV) traverse the membrane as a helical segment. The Cytoplasmic portion of the chain corresponds to 225–228 (SRLS). A helical membrane pass occupies residues 229 to 249 (FFNAISHLIVNLIMVLYCLSF). Topologically, residues 250-263 (VSQWSFSTITFSLN) are lumenal, vesicle. A helical membrane pass occupies residues 264–284 (INTLPTIVGMVVFGYTSHIFL). The Cytoplasmic portion of the chain corresponds to 285-305 (PNLEGNMKNPAQFNVMLKWSH). A helical transmembrane segment spans residues 306-326 (IAAAVFKVVFGMLGFLTFGEL). At 327–341 (TQEEISNSLPNQSFK) the chain is on the lumenal, vesicle side. The N-linked (GlcNAc...) asparagine glycan is linked to N337. The helical transmembrane segment at 342–362 (ILVNLILVVKALLSYPLPFYA) threads the bilayer. Topologically, residues 363-398 (AVQLLKNNLFLGYPQTPFTSCYSPDKSLREWAVTLR) are cytoplasmic. Residues 399 to 419 (IILVLFTLFVALSVPYLVELM) form a helical membrane-spanning segment. The Lumenal, vesicle segment spans residues 420-421 (GL). A helical membrane pass occupies residues 422 to 442 (VGNITGTMLSFIWPALFHLYI). Residues 443 to 457 (KEKTLNNFEKRFDQG) lie on the Cytoplasmic side of the membrane. A helical membrane pass occupies residues 458 to 478 (IIIMGCSVCISGVYFSSMELL). Residues 479–486 (RAINSADS) lie on the Lumenal, vesicle side of the membrane.

The protein belongs to the amino acid/polyamine transporter 2 family.

It localises to the cytoplasmic vesicle membrane. Its function is as follows. Involved in the uptake of GABA into the synaptic vesicles. This Caenorhabditis elegans protein is Vesicular GABA transporter (unc-47).